The following is a 305-amino-acid chain: MAPGGSALKEALESNSTGVDYEVKMAKVEANSKPTKSGSGSIGKFHSSNGVYELLECPVCTNLMYPPIHQCPNGHTLCSSCKLRVQNTCPTCRYELGNIRCLALEKVAESLEVPCRYQNLGCQDIFPYYSKLKHEQHCRFRSYSCPYAGSECSVTGDIPTLVDHLKDDHKVDMHDGCTFNHRYVKSNPHEVENATWMLTVFNCFGRQFCLHFEAFQLGMAPVYMAFLRFMGDENEAKKFSYSLEVGAHSRKLTWQGIPRSIRDSHRKVRDSQDGLIIPRNLALYFSGSDKEELKLRVTGRIWKEE.

The RING-type zinc-finger motif lies at 57-93 (CPVCTNLMYPPIHQCPNGHTLCSSCKLRVQNTCPTCR). Positions 107-300 (VAESLEVPCR…EELKLRVTGR (194 aa)) are SBD. An SIAH-type zinc finger spans residues 110 to 170 (SLEVPCRYQN…LVDHLKDDHK (61 aa)). Zn(2+)-binding residues include Cys-115, Cys-122, His-134, Cys-138, Cys-145, Cys-152, His-164, and His-169.

It belongs to the SINA (Seven in absentia) family. In terms of assembly, interacts with SINAT6. Interacts with ATG6 and TRAF1A. Interacts with WAV3. Interacts with FREE1. Interacts with ELC/VPS23A.

Its subcellular location is the endosome. The protein localises to the multivesicular body. The protein resides in the cytoplasmic vesicle. It localises to the autophagosome. The enzyme catalyses S-ubiquitinyl-[E2 ubiquitin-conjugating enzyme]-L-cysteine + [acceptor protein]-L-lysine = [E2 ubiquitin-conjugating enzyme]-L-cysteine + N(6)-ubiquitinyl-[acceptor protein]-L-lysine.. The protein operates within protein modification; protein ubiquitination. Its function is as follows. E3 ubiquitin-protein ligase that mediates ubiquitination and subsequent proteasomal degradation of target proteins. E3 ubiquitin ligases accept ubiquitin from an E2 ubiquitin-conjugating enzyme in the form of a thioester and then directly transfers the ubiquitin to targeted substrates. It probably triggers the ubiquitin-mediated degradation of different substrates. Mediates the proteasomal-dependent degradation of ATG6, a component of the autophagosome complex. Requires TRAF1A/MUSE14 and TRAF1B/MUSE13 to target ATG6 for ubiquitination and subsequent regulation of autophagosome assembly. Modulates directly the ubiquitination and proteasomal-dependent degradation of FREE1, a component of the ESCRT-I complex. Modulates directly the ubiquitination and proteasomal-dependent degradation of ELC/VPS23A, a component of the ESCRT-I complex. The sequence is that of Putative E3 ubiquitin-protein ligase SINAT1 from Arabidopsis thaliana (Mouse-ear cress).